Consider the following 75-residue polypeptide: UPF0291 protein Teth39_0326 (75 aa).

This sequence belongs to the UPF0291 family.

The protein resides in the cytoplasm. The protein is UPF0291 protein Teth39_0326 of Thermoanaerobacter pseudethanolicus (strain ATCC 33223 / 39E) (Clostridium thermohydrosulfuricum).